Consider the following 157-residue polypeptide: Transcription elongation factor GreA (157 aa).

Positions Ala46–Asp67 form a coiled coil.

It belongs to the GreA/GreB family.

In terms of biological role, necessary for efficient RNA polymerase transcription elongation past template-encoded arresting sites. The arresting sites in DNA have the property of trapping a certain fraction of elongating RNA polymerases that pass through, resulting in locked ternary complexes. Cleavage of the nascent transcript by cleavage factors such as GreA or GreB allows the resumption of elongation from the new 3'terminus. GreA releases sequences of 2 to 3 nucleotides. This is Transcription elongation factor GreA from Rhodospirillum rubrum (strain ATCC 11170 / ATH 1.1.1 / DSM 467 / LMG 4362 / NCIMB 8255 / S1).